The primary structure comprises 229 residues: Flagellar L-ring protein (229 aa).

Positions 1-20 (MLKTVLRLPVCAALLALAAG) are cleaved as a signal peptide. A lipid anchor (N-palmitoyl cysteine) is attached at Cys21. Cys21 is lipidated: S-diacylglycerol cysteine.

The protein belongs to the FlgH family. In terms of assembly, the basal body constitutes a major portion of the flagellar organelle and consists of four rings (L,P,S, and M) mounted on a central rod.

It localises to the cell outer membrane. The protein localises to the bacterial flagellum basal body. Its function is as follows. Assembles around the rod to form the L-ring and probably protects the motor/basal body from shearing forces during rotation. The sequence is that of Flagellar L-ring protein from Bordetella pertussis (strain Tohama I / ATCC BAA-589 / NCTC 13251).